Consider the following 345-residue polypeptide: MKEFDLESYDYHLPKELIANYPILPKEKAKLLIYERHSQKITHTTFEHVLDFFPKNTLVVLNDTKVIKARLFGSKYAFLPSKTTEVFFHRFLKNNTALTQIKGKIKVGDKIFFDENHYAEVLELLNNGQRLIAFYDNKTPLDQASILKLLEQYGHMPLPPYIKRADESLDTLEYQSVFAKHIGAVAAPTASLHFSQNTLENLLKDFKHTFLTLHVGAGTFASVETKDIREHQIHTEVLHIPKKSQEILQKSQEILCIGTTALRSVEYFKRLKTPKQEAFECDIFLHLANPIQHANYLLTNFHLPKSSLLMLVSAMIGLEKTKEIYQIAIEKKYRFYSYGDGMLIL.

This sequence belongs to the QueA family. In terms of assembly, monomer.

It localises to the cytoplasm. The catalysed reaction is 7-aminomethyl-7-carbaguanosine(34) in tRNA + S-adenosyl-L-methionine = epoxyqueuosine(34) in tRNA + adenine + L-methionine + 2 H(+). It functions in the pathway tRNA modification; tRNA-queuosine biosynthesis. Transfers and isomerizes the ribose moiety from AdoMet to the 7-aminomethyl group of 7-deazaguanine (preQ1-tRNA) to give epoxyqueuosine (oQ-tRNA). This Helicobacter acinonychis (strain Sheeba) protein is S-adenosylmethionine:tRNA ribosyltransferase-isomerase.